A 769-amino-acid polypeptide reads, in one-letter code: Post-GPI attachment to proteins factor 6 (769 aa).

An N-terminal signal peptide occupies residues 1–33 (MGRVGAGGTAREAATGSLLLLLLLLARPPPAAA). Topologically, residues 34–543 (SNSKESEAGL…STAQTVAQQR (510 aa)) are extracellular. N-linked (GlcNAc...) asparagine glycosylation is found at N138 and N411. Positions 495–531 (PCLNDCGPYGQCLLLRRYGYVYAGCSCKAGWRGWSCT) constitute an EGF-like domain. Disulfide bonds link C496–C506, C500–C519, and C521–C530. A helical membrane pass occupies residues 544-564 (AAALLLTLSNLMFLAPIAISL). Over 565–567 (HRS) the chain is Cytoplasmic. A helical membrane pass occupies residues 568-588 (FLVEASVYFYTMFFSTFYHAC). The Extracellular segment spans residues 589–603 (DQPGEAVLCILSYDT). Residues 604–624 (LQYCDFLGSGASTWVTILCMA) form a helical membrane-spanning segment. The Cytoplasmic portion of the chain corresponds to 625–627 (RLK). The helical transmembrane segment at 628–648 (TILKQVLLVLGTLVIAMSLQM) threads the bilayer. Topologically, residues 649-651 (DRR) are extracellular. A helical membrane pass occupies residues 652–672 (GIWNLMGPCVFAFVIMASMWI). The Cytoplasmic portion of the chain corresponds to 673-688 (YRCGHRGQCYPTSWQR). A helical transmembrane segment spans residues 689-709 (WVFYLLPGISMASVGIAMYTS). Residues 710 to 715 (MMTSDN) lie on the Extracellular side of the membrane. The helical transmembrane segment at 716-736 (YYYTHSIWHILLAGSAAFLLP) threads the bilayer. Topologically, residues 737–769 (PREEKAGSWACLQKFPCHYQICRNDRDELYTVT) are cytoplasmic.

This sequence belongs to the TMEM8 family. In terms of processing, glycosylated.

Its subcellular location is the cell membrane. The protein resides in the lysosome membrane. It carries out the reaction a 1,2-diacyl-sn-glycero-3-phosphocholine + H2O = a 1-acyl-sn-glycero-3-phosphocholine + a fatty acid + H(+). Its function is as follows. Involved in the lipid remodeling steps of GPI-anchor maturation. Lipid remodeling steps consist in the generation of 2 saturated fatty chains at the sn-2 position of GPI-anchor proteins (GPI-AP). Has phospholipase A2 activity that removes an acyl-chain at the sn-2 position of GPI-anchors during the remodeling of GPI. Required for the shedding of the GPI-AP CRIPTO, but not CFC1, at the cell surface. Shedding of CRIPTO modulates Nodal signaling by allowing soluble CRIPTO to act as a Nodal coreceptor on other cells. Also indirectly involved in the translocation of RAC1 from the cytosol to the plasma membrane by maintaining the steady state amount of CAV1-enriched plasma membrane subdomains, stabilizing RAC1 at the plasma membrane. This is Post-GPI attachment to proteins factor 6 from Mus musculus (Mouse).